Reading from the N-terminus, the 500-residue chain is AAA-ATPase At3g28580 (500 aa).

The chain crosses the membrane as a helical span at residues 7–29; that stretch reads LWTNTGSALATLMFVYTIFKQFF. The tract at residues 174–193 is disordered; that stretch reads NRERKLYSNTPGQSHGNNSK. Residues 180-193 are compositionally biased toward polar residues; that stretch reads YSNTPGQSHGNNSK. An ATP-binding site is contributed by 247–254; that stretch reads GPPGTGKS. A disordered region spans residues 462-500; the sequence is KEEAKKKVEEEEEEKQRKKEKVKEIEAEKEKKKKIEEEN.

This sequence belongs to the AAA ATPase family. BCS1 subfamily. Requires Mg(2+) as cofactor.

Its subcellular location is the membrane. The enzyme catalyses ATP + H2O = ADP + phosphate + H(+). This Arabidopsis thaliana (Mouse-ear cress) protein is AAA-ATPase At3g28580.